An 846-amino-acid polypeptide reads, in one-letter code: Patched domain-containing protein 4 (846 aa).

Transmembrane regions (helical) follow at residues 41 to 61 (HPVF…LSAL), 230 to 250 (SILA…TATL), 265 to 285 (GLLG…IFFI), 293 to 313 (TLLG…FELL), 336 to 356 (VMVT…MGAS), 373 to 393 (VSIL…LVFA), 465 to 485 (PFVV…CLQI), 660 to 680 (PVLI…FLVI), 686 to 706 (FWLI…MTLW), and 718 to 738 (LIYT…TFVL). The SSD domain occupies 233-392 (ARSKVLVSLV…FSFFGSCLVF (160 aa)). An N-linked (GlcNAc...) asparagine glycan is attached at Asn-762. The next 2 helical transmembrane spans lie at 765 to 785 (SFLI…FTLF) and 787 to 807 (CLLL…PVFL).

Belongs to the patched family.

The protein resides in the membrane. Its function is as follows. Could act as a repressor of canonical hedgehog signaling by antagonizing the effects of SMO, as suggested by down-regulation of hedgehog target genes, including GLI1, PTCH1, and PTCH2 in PTCHD4-expressing cells. This chain is Patched domain-containing protein 4 (PTCHD4), found in Homo sapiens (Human).